A 197-amino-acid chain; its full sequence is Ribonuclease HII (197 aa).

Residues 10-197 enclose the RNase H type-2 domain; it reads ELIAGVDEVG…APVRKLLNTL (188 aa). A divalent metal cation is bound by residues Asp16, Glu17, and Asp108.

It belongs to the RNase HII family. It depends on Mn(2+) as a cofactor. Mg(2+) is required as a cofactor.

The protein localises to the cytoplasm. It catalyses the reaction Endonucleolytic cleavage to 5'-phosphomonoester.. Functionally, endonuclease that specifically degrades the RNA of RNA-DNA hybrids. The protein is Ribonuclease HII (rnhB) of Pasteurella multocida (strain Pm70).